The chain runs to 147 residues: UPF0178 protein IL2341 (147 aa).

The protein belongs to the UPF0178 family.

The chain is UPF0178 protein IL2341 from Idiomarina loihiensis (strain ATCC BAA-735 / DSM 15497 / L2-TR).